The following is a 280-amino-acid chain: Phosphatidylserine decarboxylase proenzyme (280 aa).

Residues aspartate 86, histidine 143, and serine 246 each act as charge relay system; for autoendoproteolytic cleavage activity in the active site. The active-site Schiff-base intermediate with substrate; via pyruvic acid; for decarboxylase activity is serine 246. Pyruvic acid (Ser); by autocatalysis is present on serine 246.

The protein belongs to the phosphatidylserine decarboxylase family. PSD-B subfamily. Prokaryotic type I sub-subfamily. Heterodimer of a large membrane-associated beta subunit and a small pyruvoyl-containing alpha subunit. The cofactor is pyruvate. In terms of processing, is synthesized initially as an inactive proenzyme. Formation of the active enzyme involves a self-maturation process in which the active site pyruvoyl group is generated from an internal serine residue via an autocatalytic post-translational modification. Two non-identical subunits are generated from the proenzyme in this reaction, and the pyruvate is formed at the N-terminus of the alpha chain, which is derived from the carboxyl end of the proenzyme. The autoendoproteolytic cleavage occurs by a canonical serine protease mechanism, in which the side chain hydroxyl group of the serine supplies its oxygen atom to form the C-terminus of the beta chain, while the remainder of the serine residue undergoes an oxidative deamination to produce ammonia and the pyruvoyl prosthetic group on the alpha chain. During this reaction, the Ser that is part of the protease active site of the proenzyme becomes the pyruvoyl prosthetic group, which constitutes an essential element of the active site of the mature decarboxylase.

The protein resides in the cell membrane. It catalyses the reaction a 1,2-diacyl-sn-glycero-3-phospho-L-serine + H(+) = a 1,2-diacyl-sn-glycero-3-phosphoethanolamine + CO2. Its pathway is phospholipid metabolism; phosphatidylethanolamine biosynthesis; phosphatidylethanolamine from CDP-diacylglycerol: step 2/2. Its function is as follows. Catalyzes the formation of phosphatidylethanolamine (PtdEtn) from phosphatidylserine (PtdSer). This is Phosphatidylserine decarboxylase proenzyme from Brevibacillus brevis (strain 47 / JCM 6285 / NBRC 100599).